An 830-amino-acid polypeptide reads, in one-letter code: Serine/threonine-protein kinase atg1 (830 aa).

Residues Y14–V307 enclose the Protein kinase domain. ATP contacts are provided by residues I20–V28 and K43. D157 acts as the Proton acceptor in catalysis. S346 is modified (phosphoserine). Over residues T448 to P468 the composition is skewed to polar residues. Positions T448 to E480 are disordered.

This sequence belongs to the protein kinase superfamily. Ser/Thr protein kinase family. APG1/unc-51/ULK1 subfamily. Homodimer. Component of the atg1 kinase complex composed of at least atg1, atg13, atg17 and atg101. Interacts directly with atg13. Post-translationally, phosphorylated. Dephosphorylated under depletion of nitrogen.

The catalysed reaction is L-seryl-[protein] + ATP = O-phospho-L-seryl-[protein] + ADP + H(+). It carries out the reaction L-threonyl-[protein] + ATP = O-phospho-L-threonyl-[protein] + ADP + H(+). Functionally, serine/threonine protein kinase involved in the cytoplasm to vacuole transport (Cvt) and found to be essential in autophagy, where it is required for the formation of autophagosomes. Involved in the clearance of protein aggregates which cannot be efficiently cleared by the proteasome. Required for selective autophagic degradation of the nucleus (nucleophagy) as well as for mitophagy which contributes to regulate mitochondrial quantity and quality by eliminating the mitochondria to a basal level to fulfill cellular energy requirements and preventing excess ROS production. Also involved in endoplasmic reticulum-specific autophagic process, in selective removal of ER-associated degradation (ERAD) substrates. Plays a key role in ATG9 and ATG23 cycling through the pre-autophagosomal structure and is necessary to promote ATG18 binding to ATG9 through phosphorylation of ATG9. Catalyzes phosphorylation of ATG4, decreasing the interaction between ATG4 and ATG8 and impairing deconjugation of PE-conjugated forms of ATG8. Autophagy functions to supply nitrogen and is activated when cells cannot access exogenous nitrogen, thus ensuring that they can adapt and subsequently propagate. Finally, atg13 is also required for glycogen storage during stationary phase and has a role in meiosis and sporulation. This chain is Serine/threonine-protein kinase atg1, found in Schizosaccharomyces pombe (strain 972 / ATCC 24843) (Fission yeast).